The following is a 310-amino-acid chain: Hairy/enhancer-of-split related with YRPW motif-like protein (310 aa).

Residues 1–21 are disordered; sequence MKRPHDYSSPDSDTDELIDVG. The segment covering 12–21 has biased composition (acidic residues); it reads SDTDELIDVG. The 56-residue stretch at 43–98 folds into the bHLH domain; sequence ARKKRRGIIEKRRRDRINHSLSELRRLVPSAFEKQGSSKLEKAEILQMTVDHLKLL. One can recognise an Orange domain in the interval 116-152; the sequence is YRTLGFRECVGEVVRYLSSLEGVESSDPIGARLVSHL. 2 stretches are compositionally biased toward low complexity: residues 182-192 and 261-273; these read LQAASPPASST and PSSS…SSPP. 2 disordered regions span residues 182 to 208 and 248 to 310; these read LQAA…HGTA and HRLQ…IGAF. Polar residues predominate over residues 293–302; it reads LSSSSKSAQA.

Belongs to the HEY family.

Its subcellular location is the nucleus. Functionally, transcriptional repressor which functions as a downstream effector of Notch signaling. This Danio rerio (Zebrafish) protein is Hairy/enhancer-of-split related with YRPW motif-like protein (heyl).